Here is a 275-residue protein sequence, read N- to C-terminus: tRNA (guanine-N(7)-)-methyltransferase (275 aa).

The disordered stretch occupies residues 1–73 (MRHHGRMHAR…GGQQDTWERL (73 aa)). Residues 46–59 (AHRHRRVTSFRSRR) show a composition bias toward basic residues. Positions 107, 132, 159, and 182 each coordinate S-adenosyl-L-methionine. The active site involves Asp182. Residues Lys186, Asp218, and 254 to 257 (TKYE) each bind substrate.

It belongs to the class I-like SAM-binding methyltransferase superfamily. TrmB family.

The catalysed reaction is guanosine(46) in tRNA + S-adenosyl-L-methionine = N(7)-methylguanosine(46) in tRNA + S-adenosyl-L-homocysteine. It functions in the pathway tRNA modification; N(7)-methylguanine-tRNA biosynthesis. Catalyzes the formation of N(7)-methylguanine at position 46 (m7G46) in tRNA. The protein is tRNA (guanine-N(7)-)-methyltransferase of Mycobacterium sp. (strain KMS).